The primary structure comprises 77 residues: U8-lycotoxin-Ls1a (77 aa).

The first 20 residues, 1–20, serve as a signal peptide directing secretion; the sequence is MKLIIFTGLVLFAIVSLIEA. Positions 21–26 are excised as a propeptide; that stretch reads QAENEK.

The protein belongs to the neurotoxin 19 (CSTX) family. 08 (U8-Lctx) subfamily. Contains 4 disulfide bonds. Expressed by the venom gland.

It is found in the secreted. This Lycosa singoriensis (Wolf spider) protein is U8-lycotoxin-Ls1a.